A 262-amino-acid chain; its full sequence is Flap endonuclease Xni (262 aa).

Aspartate 105 lines the Mg(2+) pocket. A 5'-3' exonuclease domain is found at 164–251; sequence SQFLDLMALA…NINLKDFRAN (88 aa). Leucine 172, alanine 173, proline 181, isoleucine 183, and isoleucine 186 together coordinate K(+). Residues 185 to 190 form an interaction with DNA region; it reads GIGPKS.

The protein belongs to the Xni family. Mg(2+) is required as a cofactor. K(+) serves as cofactor.

Its function is as follows. Has flap endonuclease activity. During DNA replication, flap endonucleases cleave the 5'-overhanging flap structure that is generated by displacement synthesis when DNA polymerase encounters the 5'-end of a downstream Okazaki fragment. This Shewanella putrefaciens (strain CN-32 / ATCC BAA-453) protein is Flap endonuclease Xni.